Reading from the N-terminus, the 311-residue chain is MKVAVLGAAGGIGQALALLLKTQLPADSKLSLYDIAPVTPGVAVDLSHIPTAVEVKGFAGQDPSPALEGADVVLISAGVARKPGMDRSDLFNINAGIVRNLVEKCAATCPKALIGIITNPVNTTVAIAAEVLKAAGVYDKNRLFGVTTLDVIRSETFVAEAKGLNVADVNVNVIGGHSGVTILPLLSQIEGVSFSDEEVAALTTRIQNAGTEVVEAKAGGGSATLSMGQAACRFGLSLVRGLQGEANVVECAYVDGGSEHAEFFAQPILLGKNGVEKVLAYGDVSEFEANARDAMLDTLNADIKLGVEFVK.

NAD(+)-binding positions include 7-13 (GAAGGIG) and aspartate 34. The substrate site is built by arginine 81 and arginine 87. NAD(+) contacts are provided by residues asparagine 94 and 117 to 119 (ITN). The substrate site is built by asparagine 119 and arginine 153. The active-site Proton acceptor is histidine 177. Methionine 227 lines the NAD(+) pocket.

Belongs to the LDH/MDH superfamily. MDH type 1 family. Homodimer.

The enzyme catalyses (S)-malate + NAD(+) = oxaloacetate + NADH + H(+). Functionally, catalyzes the reversible oxidation of malate to oxaloacetate. In Shewanella woodyi (strain ATCC 51908 / MS32), this protein is Malate dehydrogenase.